The chain runs to 156 residues: Endogenous retrovirus group K member 113 Pro protein (156 aa).

A Peptidase A2 domain is found at 21–96 (FEGLVDTGAD…IPLNLWGRDL (76 aa)). Residue D26 is part of the active site. The G-patch domain maps to 111–156 (YSPTSQKIMTKMGYIPGKGLGKNEDGIKIPVEAKINQKREGIGYPF).

This sequence belongs to the peptidase A2 family. HERV class-II K(HML-2) subfamily. Active as a homodimer. In terms of processing, autoproteolytically processed at the N-terminus. Expected C-terminal autoprocessing not detected. The sequence shown is that of the processed Pro protein.

It catalyses the reaction Processing at the authentic HIV-1 PR recognition site and release of the mature p17 matrix and the p24 capsid protein, as a result of the cleavage of the -SQNY-|-PIVQ- cleavage site.. In terms of biological role, retroviral proteases have roles in the processing of the primary translation products and the maturation of the viral particle. Endogenous Pro proteins may have kept, lost or modified their original function during evolution. The polypeptide is Endogenous retrovirus group K member 113 Pro protein (HERVK_113) (Homo sapiens (Human)).